A 542-amino-acid chain; its full sequence is Cytochrome P450 monooxygenase sdnH (542 aa).

A helical membrane pass occupies residues 25-45 (LYVAGGILGAFTVYSIILVVY). The segment at 141-160 (IIPPRGLGQEDSIGSTRSHD) is disordered. The helical transmembrane segment at 340–360 (FMGAGTYPTAATLIFVAYYIL) threads the bilayer. Cysteine 483 lines the heme pocket. An N-linked (GlcNAc...) asparagine glycan is attached at asparagine 506.

The protein belongs to the cytochrome P450 family. Heme is required as a cofactor.

It is found in the membrane. It participates in antibiotic biosynthesis. Its function is as follows. Cytochrome P450 monooxygenase; part of the gene cluster that mediates the biosynthesis of sordarin and hypoxysordarin, glycoside antibiotics with a unique tetracyclic diterpene aglycone structure. First, the geranylgeranyl diphosphate synthase sdnC constructs GGDP from farnesyl diphosphate and isopentenyl diphosphate. The diterpene cyclase sdnA then catalyzes the cyclization of GGDP to afford cycloaraneosene. Cycloaraneosene is then hydroxylated four times by the putative cytochrome P450 monooxygenases sdnB, sdnE, sdnF and sdnH to give a hydroxylated cycloaraneosene derivative such as cycloaraneosene-8,9,13,19-tetraol. Although the order of the hydroxylations is unclear, at least C8, C9 and C13 of the cycloaraneosene skeleton are hydroxylated before the sordaricin formation. Dehydration of the 13-hydroxy group of the hydroxylated cycloaraneosene derivative might be catalyzed by an unassigned hypothetical protein such as sdnG and sdnP to construct the cyclopentadiene moiety. The FAD-dependent oxidoreductase sdnN is proposed to catalyze the oxidation at C9 of the hydroxylated cycloaraneosene derivative and also catalyze the Baeyer-Villiger oxidation to give the lactone intermediate. The presumed lactone intermediate would be hydrolyzed to give an acrolein moiety and a carboxylate moiety. Then, [4+2]cycloaddition would occur between the acrolein moiety and the cyclopentadiene moiety to give sordaricin. SdnN might also be involved in the [4+2]cycloaddition after the hypothesized oxidation to accommodate the oxidized product and prompt the [4+2]cycloaddition. GDP-6-deoxy-D-altrose may be biosynthesized from GDP-D-mannose by the putative GDP-mannose-4,6-dehydratase sdnI and the short-chain dehydrogenase sdnK. The glycosyltransferase sdnJ catalyzes the attachment of 6-deoxy-D-altrose onto the 19-hydroxy group of sordaricin to give 4'-O-demethylsordarin. The methyltransferase sdnD would complete the biosynthesis of sordarin. Sordarin can be further modified into hypoxysordarin. The unique acyl chain at the 3'-hydroxy group of hypoxysordarin would be constructed by an iterative type I PKS sdnO and the trans-acting polyketide methyltransferase sdnL. SdnL would be responsible for the introduction of an alpha-methyl group of the polyketide chain. Alternatively, the beta-lactamase-like protein sdnR might be responsible for the cleavage and transfer of the polyketide chain from the PKS sdnO to sordarin. Two putative cytochrome P450 monooxygenases, sdnQ and sdnT, might catalyze the epoxidations of the polyketide chain to complete the biosynthesis of hypoxysordarin. Transcriptional regulators sdnM and sdnS are presumably encoded for the transcriptional regulation of the expression of the sdn gene cluster. In Sordaria araneosa (Pleurage araneosa), this protein is Cytochrome P450 monooxygenase sdnH.